The chain runs to 585 residues: Type IV pilus assembly ATPase TfpB (585 aa).

346–351 (GSGKTT) contacts ATP. Residues Cys-476, Cys-479, Cys-511, and Cys-514 each coordinate Zn(2+).

Belongs to the GSP E family.

It is found in the cytoplasm. ATPase component of the type IV pilus (T4P). Acts as a molecular motor to provide the energy that is required for biogenesis of the pilus and the extrusion of substrates generated in the cytoplasm. TfpB is required for optimal T4P extension and, consequently, efficient natural transformation. May play a role in initiating T4P extension. This chain is Type IV pilus assembly ATPase TfpB, found in Acinetobacter baylyi (strain ATCC 33305 / BD413 / ADP1).